A 157-amino-acid chain; its full sequence is Transcription elongation factor GreA (157 aa).

The protein belongs to the GreA/GreB family.

In terms of biological role, necessary for efficient RNA polymerase transcription elongation past template-encoded arresting sites. The arresting sites in DNA have the property of trapping a certain fraction of elongating RNA polymerases that pass through, resulting in locked ternary complexes. Cleavage of the nascent transcript by cleavage factors such as GreA or GreB allows the resumption of elongation from the new 3'terminus. GreA releases sequences of 2 to 3 nucleotides. In Maricaulis maris (strain MCS10) (Caulobacter maris), this protein is Transcription elongation factor GreA.